Reading from the N-terminus, the 921-residue chain is Translation initiation factor IF-2 (921 aa).

A disordered region spans residues 1–296 (MADNNTPGDK…PGPQKQRGRL (296 aa)). The span at 80–89 (RPSGPRPGSS) shows a compositional bias: low complexity. The segment covering 116–182 (ARVRDMEERR…AKKRFGEGEA (67 aa)) has biased composition (basic and acidic residues). The segment covering 183–257 (PRPATAAPQQ…LGRAPGVAAG (75 aa)) has biased composition (low complexity). In terms of domain architecture, tr-type G spans 417-586 (PRSPVVTVMG…MIALQADILD (170 aa)). Residues 426 to 433 (GHVDHGKT) form a G1 region. A GTP-binding site is contributed by 426-433 (GHVDHGKT). Residues 451–455 (GITQH) form a G2 region. The interval 474-477 (DTPG) is G3. GTP is bound by residues 474–478 (DTPGH) and 528–531 (NKID). Positions 528–531 (NKID) are G4. Residues 564–566 (SAK) form a G5 region.

The protein belongs to the TRAFAC class translation factor GTPase superfamily. Classic translation factor GTPase family. IF-2 subfamily.

The protein localises to the cytoplasm. Functionally, one of the essential components for the initiation of protein synthesis. Protects formylmethionyl-tRNA from spontaneous hydrolysis and promotes its binding to the 30S ribosomal subunits. Also involved in the hydrolysis of GTP during the formation of the 70S ribosomal complex. In Bradyrhizobium sp. (strain BTAi1 / ATCC BAA-1182), this protein is Translation initiation factor IF-2.